We begin with the raw amino-acid sequence, 308 residues long: Ectoine dioxygenase (308 aa).

Glutamine 131 is an L-ectoine binding site. Lysine 137 contacts 2-oxoglutarate. Positions 148, 150, and 249 each coordinate Fe cation.

It belongs to the PhyH family. EctD subfamily. Homodimer. Requires Fe(2+) as cofactor.

The enzyme catalyses L-ectoine + 2-oxoglutarate + O2 = 5-hydroxyectoine + succinate + CO2. Its function is as follows. Involved in the biosynthesis of 5-hydroxyectoine, called compatible solute, which helps organisms to survive extreme osmotic stress by acting as a highly soluble organic osmolyte. Catalyzes the 2-oxoglutarate-dependent selective hydroxylation of L-ectoine to yield (4S,5S)-5-hydroxyectoine. This chain is Ectoine dioxygenase, found in Bordetella parapertussis (strain 12822 / ATCC BAA-587 / NCTC 13253).